Here is a 433-residue protein sequence, read N- to C-terminus: Probable M18 family aminopeptidase 2 (433 aa).

Zn(2+) contacts are provided by H84, H161, and H409.

Belongs to the peptidase M18 family. The cofactor is Zn(2+).

The protein is Probable M18 family aminopeptidase 2 (apeB) of Clostridium acetobutylicum (strain ATCC 824 / DSM 792 / JCM 1419 / IAM 19013 / LMG 5710 / NBRC 13948 / NRRL B-527 / VKM B-1787 / 2291 / W).